The following is a 711-amino-acid chain: Nucleolin (711 aa).

A disordered region spans residues 1 to 304; the sequence is MVKLAKAGKN…KKQKVEGTEP (304 aa). Lysine 9, lysine 15, and lysine 16 each carry N6-acetyllysine. Residues 24-43 are compositionally biased toward acidic residues; sequence VEEDSEDEEMSEDEEDDSSG. 4 positions are modified to phosphoserine: serine 28, serine 34, serine 41, and serine 42. Residues 56–107 show a composition bias toward low complexity; that stretch reads AAATSAKKVVVSPTKKVAVATPAKKAAVTPGKKAAATPAKKTVTPAKAVATP. The stretch at 58–65 is repeat 1; that stretch reads ATSAKKVV. Residues 58-135 are 8 X 8 AA tandem repeats of X-T-P-X-K-K-X-X; the sequence is ATSAKKVVVS…GAAIPAKGAK (78 aa). Serine 67 is modified (phosphoserine). Threonine 69, threonine 76, threonine 84, and threonine 92 each carry phosphothreonine. Repeat copies occupy residues 75 to 82, 83 to 90, and 91 to 98. N6-acetyllysine is present on lysine 96. Threonine 99 is modified (phosphothreonine). The 5; truncated repeat unit spans residues 99 to 104; it reads TPAKAV. Lysine 102 carries the post-translational modification N6-acetyllysine. Residues 105 to 112 form repeat 6; the sequence is ATPGKKGA. Threonine 106 is subject to Phosphothreonine. N6-acetyllysine is present on lysine 109. Threonine 113 carries the post-translational modification Phosphothreonine. At lysine 116 the chain carries N6-acetyllysine. 2 tandem repeats follow at residues 120–127 and 128–135. Threonine 121 bears the Phosphothreonine mark. The segment covering 122 to 137 has biased composition (low complexity); that stretch reads PGKKGAAIPAKGAKNG. Lysine 124 carries the post-translational modification N6-acetyllysine. 4 positions are modified to phosphoserine: serine 145, serine 153, serine 184, and serine 207. Acidic residues-rich tracts occupy residues 145–171 and 184–212; these read SDEE…DEIE and SEDE…EEAM. Residue threonine 215 is modified to Phosphothreonine. The segment covering 235–273 has biased composition (acidic residues); the sequence is EDEDEEEDDEDEDDDDDEDDEDEDDDDEDEEEEEEEEEP. Basic and acidic residues predominate over residues 274–301; sequence VKEAPGKRKKEMAKQKAAPEAKKQKVEG. Residue lysine 298 forms a Glycyl lysine isopeptide (Lys-Gly) (interchain with G-Cter in SUMO1); alternate linkage. Residue lysine 298 forms a Glycyl lysine isopeptide (Lys-Gly) (interchain with G-Cter in SUMO2); alternate linkage. Threonine 302 carries the phosphothreonine modification. RRM domains lie at 308–384 and 394–467; these read FNLF…KPKG and RTLL…YTGE. Lysine 319 is modified (N6-acetyllysine). Residue lysine 325 forms a Glycyl lysine isopeptide (Lys-Gly) (interchain with G-Cter in SUMO1); alternate linkage. Residue lysine 325 forms a Glycyl lysine isopeptide (Lys-Gly) (interchain with G-Cter in SUMO2); alternate linkage. Lysine 349 is modified (N6-acetyllysine). Serine 357 carries the post-translational modification Phosphoserine. The residue at position 368 (threonine 368) is a Phosphothreonine. Lysine 371 participates in a covalent cross-link: Glycyl lysine isopeptide (Lys-Gly) (interchain with G-Cter in SUMO2). A Glycyl lysine isopeptide (Lys-Gly) (interchain with G-Cter in SUMO2); alternate cross-link involves residue lysine 378. Lysine 378 is modified (N6-acetyllysine; alternate). Lysine 399 and lysine 404 each carry N6-acetyllysine. At threonine 406 the chain carries Phosphothreonine. Residues lysine 428 and lysine 445 each carry the N6-acetyllysine modification. Phosphoserine occurs at positions 459 and 461. 2 positions are modified to N6-acetyllysine: lysine 468 and lysine 478. The region spanning 487-561 is the RRM 3 domain; sequence KTLVLSNLSY…RAIRLELQGP (75 aa). A Glycyl lysine isopeptide (Lys-Gly) (interchain with G-Cter in SUMO2); alternate cross-link involves residue lysine 514. Lysine 514 is subject to N6-acetyllysine; alternate. At lysine 522 the chain carries N6-acetyllysine. Serine 564 bears the Phosphoserine mark. Lysine 573 carries the N6-acetyllysine modification. Residues 573 to 648 form the RRM 4 domain; the sequence is KTLFVKGLSE…NKVTLDWAKP (76 aa). Lysine 578 participates in a covalent cross-link: Glycyl lysine isopeptide (Lys-Gly) (interchain with G-Cter in SUMO2); alternate. An N6-acetyllysine; alternate modification is found at lysine 578. Serine 581 bears the Phosphoserine mark. Lysine 590 participates in a covalent cross-link: Glycyl lysine isopeptide (Lys-Gly) (interchain with G-Cter in SUMO1); alternate. Lysine 590 is covalently cross-linked (Glycyl lysine isopeptide (Lys-Gly) (interchain with G-Cter in SUMO2); alternate). A phosphoserine mark is found at serine 592 and serine 620. Lysine 625 participates in a covalent cross-link: Glycyl lysine isopeptide (Lys-Gly) (interchain with G-Cter in SUMO2). The interval 641 to 711 is disordered; it reads VTLDWAKPKG…KPQGKKTKFE (71 aa). N6-acetyllysine is present on lysine 647. Residues 651–697 are compositionally biased toward gly residues; that stretch reads EGGFGGRGGGRGGFGGRGGGRGGRGGFGGRGRGGFGGRGGFRGGRGG. Asymmetric dimethylarginine is present on residues arginine 657, arginine 661, arginine 667, arginine 671, arginine 674, arginine 680, arginine 682, arginine 688, and arginine 692. Arginine 695 carries the asymmetric dimethylarginine; alternate modification. An Omega-N-methylarginine; alternate modification is found at arginine 695. Positions 698 to 711 are enriched in basic and acidic residues; that stretch reads GGDHKPQGKKTKFE.

In terms of assembly, identified in a IGF2BP1-dependent mRNP granule complex containing untranslated mRNAs. Component of the SWAP complex that consists of NPM1, NCL/nucleolin, PARP1 and SWAP70. Component of a complex which is at least composed of HTATSF1/Tat-SF1, the P-TEFb complex components CDK9 and CCNT1, RNA polymerase II, SUPT5H, and NCL/nucleolin. Interacts with AICDA. Interacts with APTX. Interacts with C1QBP. Interacts with ERBB4. Interacts (via C-terminus) with FMR1 isoform 6 (via N-terminus). Interacts with GZF1; this interaction is important for nucleolar localization of GZF1. Interacts with NSUN2. Interacts with NVL. Interacts (via N-terminus domain) with SETX. Interacts (via RRM1 and C-terminal RRM4/Arg/Gly-rich domains) with TERT; the interaction is important for nucleolar localization of TERT. Interacts with WDR46. Interacts with ZFP36. Interacts with LRRC34. Interacts with RRP1B. Interacts with HNRNPU; this interaction occurs during mitosis. Interacts with RIOK1; RIOK1 recruits NCL to PRMT5 for symmetrically methylation. Interacts with ZBTB7B. Interacts with MDK; this interaction promotes NCL clustering and lateral movements of this complex into lipid rafts leading to MDK internalization. Interacts with HDGF. Interacts with ALKBH2. Interacts with IGFBP5; this interaction is necessary for IGFBP5 localization to the nucleus. In terms of processing, some glutamate residues are glycylated by TTLL8. This modification occurs exclusively on glutamate residues and results in a glycine chain on the gamma-carboxyl group. Post-translationally, symmetrically methylated by PRMT5.

Its subcellular location is the nucleus. The protein localises to the nucleolus. It localises to the cytoplasm. Its function is as follows. Nucleolin is the major nucleolar protein of growing eukaryotic cells. It is found associated with intranucleolar chromatin and pre-ribosomal particles. It induces chromatin decondensation by binding to histone H1. It is thought to play a role in pre-rRNA transcription and ribosome assembly. May play a role in the process of transcriptional elongation. Binds RNA oligonucleotides with 5'-UUAGGG-3' repeats more tightly than the telomeric single-stranded DNA 5'-TTAGGG-3' repeats. This Macaca fascicularis (Crab-eating macaque) protein is Nucleolin (NCL).